Consider the following 609-residue polypeptide: MCGIVGAIAQRDVAEILLEGLRRLEYRGYDSAGLAVVDAEGHMTRLRRLGKVQMLAQAAEEHPLHGGTGIAHTRWATHGEPSEANAHPHVSEHIVVVHNGIIENHEPLREELKARGYTFVSETDTEVIAHLVNWELKQGGTLREAVLRAIPQLRGAYGTVIMDSRHPDTLLAARSGSPLVIGLGMGENFIASDQLALLPVTRRFIFLEEGDIAEITRRSVNIFDKTGAEVKRQDIESNLQYDAGDKGIYRHYMQKEIYEQPNAIKNTLTGRISHGQVDLSELGPNADELLSKVEHIQILACGTSYNSGMVSRYWFESLAGIPCDVEIASEFRYRKSAVRRNSLMITLSQSGETADTLAGLRLSKELGYLGSLAICNVPGSSLVRESDLALMTNAGTEIGVASTKAFTTQLTVLLMLVAKLSRLKGLDASIEHDIVHGLQALPSRIEQMLSQDKRIEALAEDFSDKHHALFLGRGDQYPIALEGALKLKEISYIHAEAYAAGELKHGPLALIDADMPVIVVAPNNELLEKLKSNIEEVRARGGQLYVFADQDAGFVSSDNMHIIEMPHVEEVIAPIFYTVPLQLLAYHVALIKGTDVDQPRNLAKSVTVE.

Catalysis depends on C2, which acts as the Nucleophile; for GATase activity. The Glutamine amidotransferase type-2 domain occupies 2–218 (CGIVGAIAQR…EGDIAEITRR (217 aa)). SIS domains follow at residues 286–426 (ADEL…LKGL) and 458–599 (LAED…VDQP). The For Fru-6P isomerization activity role is filled by K604.

As to quaternary structure, homodimer.

It localises to the cytoplasm. It catalyses the reaction D-fructose 6-phosphate + L-glutamine = D-glucosamine 6-phosphate + L-glutamate. In terms of biological role, catalyzes the first step in hexosamine metabolism, converting fructose-6P into glucosamine-6P using glutamine as a nitrogen source. The polypeptide is Glutamine--fructose-6-phosphate aminotransferase [isomerizing] (Shigella flexneri).